The chain runs to 541 residues: Zinc finger protein 513 (541 aa).

Residues 1–118 (MPRRKQSHPQ…GEARGERPGP (118 aa)) form a disordered region. Residues 44 to 57 (LEFEEEEEEEEGDG) show a composition bias toward acidic residues. Ser85 and Ser96 each carry phosphoserine. Basic and acidic residues predominate over residues 103–115 (EPARGPGEARGER). 8 consecutive C2H2-type zinc fingers follow at residues 150 to 172 (YSCR…MQTH), 178 to 200 (FRCG…TRTH), 206 to 228 (YRCP…QRTH), 360 to 382 (FACS…MKTH), 388 to 410 (FRCA…QRVH), 416 to 438 (YKCP…GRIH), 444 to 466 (FRCS…MLRH), and 472 to 494 (FRCA…QKVH). The segment at 492-541 (KVHGHGGAGGPGLSASEGWAPPHSPPSVLSSRGPPALGTAGSRAVHTDSS) is disordered.

This sequence belongs to the krueppel C2H2-type zinc-finger protein family. In terms of assembly, binds DNA. Can associate with the proximal promoter regions of PAX6 and SP4, and their known targets including ARR3, RHO, OPN1MW2 and OPN1SW. In the retina, expressed in the outer and inner nuclear layers, and the ganglion cell layer.

The protein localises to the nucleus. Functionally, transcriptional regulator that plays a role in retinal development and maintenance. This Homo sapiens (Human) protein is Zinc finger protein 513 (ZNF513).